Reading from the N-terminus, the 130-residue chain is Mini-ribonuclease 3 (130 aa).

Asp-19 is an active-site residue. A disordered region spans residues Glu-69–Ala-91.

This sequence belongs to the MrnC RNase family. In terms of assembly, homodimer. Mg(2+) is required as a cofactor.

The protein localises to the cytoplasm. Its function is as follows. Involved in correct processing of both the 5' and 3' ends of 23S rRNA precursor. Processes 30S rRNA precursor transcript even in absence of ribonuclease 3 (Rnc); Rnc processes 30S rRNA into smaller rRNA precursors. The protein is Mini-ribonuclease 3 of Symbiobacterium thermophilum (strain DSM 24528 / JCM 14929 / IAM 14863 / T).